The primary structure comprises 324 residues: Dehydrogenase/reductase SDR family member 7C-A (324 aa).

Positions 1-17 (MAVPSVMVLPLLIVVFA) are cleaved as a signal peptide. 41-65 (VITDAVSGMGSECARLFHAGGARLV) is an NAD(+) binding site. Residue S178 participates in substrate binding. Catalysis depends on Y191, which acts as the Proton acceptor.

Belongs to the short-chain dehydrogenases/reductases (SDR) family.

The protein resides in the secreted. Putative oxidoreductase. This is Dehydrogenase/reductase SDR family member 7C-A (dhrs7ca) from Danio rerio (Zebrafish).